A 301-amino-acid polypeptide reads, in one-letter code: G-protein coupled receptor homolog U51 (301 aa).

The Extracellular segment spans residues 1 to 15 (MEKETKSLAWPATAE). A helical transmembrane segment spans residues 16-36 (FYGWVFIFSSIQLCTVVFLTV). Residues 37–48 (RFNGFKVGREYA) lie on the Cytoplasmic side of the membrane. A helical transmembrane segment spans residues 49–69 (VFTFAGMSFNCFLLPIKMGLL). Topologically, residues 70–82 (SGHWTLPRDFCAI) are extracellular. Residues 83-103 (LLYIDDFSAYFSSWSLVFMAI) form a helical membrane-spanning segment. Over 104–122 (ERINYFCYSTPLLNENSKA) the chain is Cytoplasmic. The chain crosses the membrane as a helical span at residues 123–143 (LAKVCFPIVWVVSGVQALQML). Over 144-168 (NNYKATALQNETGQCFLAFLRSGHD) the chain is Extracellular. Residue Asn-153 is glycosylated (N-linked (GlcNAc...) asparagine; by host). A helical membrane pass occupies residues 169 to 189 (MWLMLVYSVVIPVMLVFFYLY). Residues 190–199 (SKNFMLLKDE) are Cytoplasmic-facing. Residues 200 to 220 (LSSVTTYLCIYLLLGTIAHLP) traverse the membrane as a helical segment. Residues 221–238 (KAALSEIESDKIFYGLRD) lie on the Extracellular side of the membrane. The chain crosses the membrane as a helical span at residues 239-259 (IFMALPVLKVYYISAMAYCMA). Over 260-301 (CDDHTVPVRLCSIWLVNLCKKCFSCTRREKGSDLEVGIKMLK) the chain is Cytoplasmic.

This sequence belongs to the G-protein coupled receptor 1 family.

It localises to the host cell membrane. The polypeptide is G-protein coupled receptor homolog U51 (U51) (Homo sapiens (Human)).